The primary structure comprises 547 residues: Sesquiterpene synthase TPS3 (547 aa).

The (2E,6E)-farnesyl diphosphate site is built by R265, D302, D306, R443, and D446. Mg(2+)-binding residues include D302 and D306. A DDXXD motif motif is present at residues 302-306 (DDIYD). Mg(2+) contacts are provided by D446, T450, and E454.

This sequence belongs to the terpene synthase family. Tpsb subfamily. As to quaternary structure, monomer. Mg(2+) serves as cofactor.

It localises to the cytoplasm. The catalysed reaction is (2E,6E)-farnesyl diphosphate = (1S,5S,6R)-alpha-bergamotene + diphosphate. It participates in secondary metabolite biosynthesis; terpenoid biosynthesis. Functionally, sesquiterpene synthase involved in the biosynthesis of volatile organic compounds. Mediates the conversion of (2E,6E)-farnesyl diphosphate (FPP) into alpha-bergamotene. Does not use (2E)-geranyl diphosphate (GPP) as substrate. This chain is Sesquiterpene synthase TPS3, found in Cananga odorata (Ylang-ylang tree).